The chain runs to 397 residues: Putative F-box protein At1g26510 (397 aa).

The interval 1-23 (MRTRSKKTKTVNNNNDLQKSEEK) is disordered. Residues 24 to 71 (QKFDQLPLDLEIEMFRRLPLKSVARFLTLSKSCATTIRSPSFITSFPS) enclose the F-box domain.

The polypeptide is Putative F-box protein At1g26510 (Arabidopsis thaliana (Mouse-ear cress)).